A 180-amino-acid polypeptide reads, in one-letter code: UPF0397 protein SSA_0592 (180 aa).

5 consecutive transmembrane segments (helical) span residues Val-9–Thr-29, Leu-45–Ile-65, Gly-72–Phe-92, Leu-113–Val-133, and Ile-146–Ala-166.

Belongs to the UPF0397 family.

The protein localises to the cell membrane. This Streptococcus sanguinis (strain SK36) protein is UPF0397 protein SSA_0592.